The primary structure comprises 133 residues: uncharacterized protein (133 aa).

The next 2 membrane-spanning stretches (helical) occupy residues 8 to 28 (MVLL…LLLL) and 46 to 66 (SFSI…SIGA).

Its subcellular location is the membrane. This is an uncharacterized protein from Saccharomyces cerevisiae (strain ATCC 204508 / S288c) (Baker's yeast).